The chain runs to 154 residues: Melatonin receptor type 1A (154 aa).

The Cytoplasmic segment spans residues 1–19; it reads YCYICHSLKYDRWYSNRNS. Residues 20 to 40 form a helical membrane-spanning segment; that stretch reads LCCVFLICVLTLVAIVPNLCM. Residues 41 to 62 are Extracellular-facing; sequence GTLQYDPRIYSCTFAQSVSSAY. A helical transmembrane segment spans residues 63–83; it reads TIAVVVFHFLVPMVIVIFRYL. The Cytoplasmic segment spans residues 84 to 115; it reads RIWVLVLQIRWRAKPENNPRLKPQDFRNFVTM. The helical transmembrane segment at 116–136 threads the bilayer; that stretch reads FVVFVLFAICWAPLNFIGLAV. Residues 137–149 are Extracellular-facing; the sequence is ASDPASMAPRIPE.

The protein belongs to the G-protein coupled receptor 1 family.

The protein resides in the cell membrane. Its function is as follows. High affinity receptor for melatonin. Likely to mediate the reproductive and circadian actions of melatonin. The activity of this receptor is mediated by pertussis toxin sensitive G proteins that inhibit adenylate cyclase activity. The chain is Melatonin receptor type 1A (MTNR1A) from Sus scrofa (Pig).